The chain runs to 176 residues: MLTLNTRINSADKVSAQLVLPYESRENSRLRTALSSGEEVAIFIPRGTVLRHNDLLMGDDGRVVQIVAARESTYRITCANPHDLLRCAFHLGNRHTQTQVGEGFLRIARDNVLKEMLEGLGATVIEEDAQFEPEAGAYGSGGHHHHGESSQGHAHGPLAPIPVHQKIHRPSDIPSR.

Positions E134–R176 are disordered.

The protein belongs to the UreE family.

The protein resides in the cytoplasm. In terms of biological role, involved in urease metallocenter assembly. Binds nickel. Probably functions as a nickel donor during metallocenter assembly. The sequence is that of Urease accessory protein UreE from Nitrosospira multiformis (strain ATCC 25196 / NCIMB 11849 / C 71).